Here is a 66-residue protein sequence, read N- to C-terminus: Beta-toxin Cb1 (66 aa).

One can recognise an LCN-type CS-alpha/beta domain in the interval 1–66 (KEGYIVNHST…VWPLPKKTCN (66 aa)). 4 disulfides stabilise this stretch: C12-C65, C16-C41, C25-C46, and C29-C48.

This sequence belongs to the long (4 C-C) scorpion toxin superfamily. Sodium channel inhibitor family. Beta subfamily. As to expression, expressed by the venom gland.

It localises to the secreted. Inhibited by human antibodies scFvs 10FG2 and LR. Functionally, beta toxins bind voltage-independently at site-4 of sodium channels (Nav) and reduces peak current and shifts the voltage of activation toward more negative potentials thereby affecting sodium channel activation and promoting spontaneous and repetitive firing. Has an inhibitory effect on voltage-gated sodium channel hNav1.6/SCN8A, affecting both the activation and inactivation processes. This toxin is active against mammals and lethal to mice. This is Beta-toxin Cb1 from Centruroides baergi (Scorpion).